The primary structure comprises 377 residues: Probable protein phosphatase 2C 7 (377 aa).

Disordered regions lie at residues 1–68 (MAAH…GKAA) and 80–99 (TTVA…EDDE). Residues 21 to 39 (PPAAEAEAAAAAAAIARAA) show a composition bias toward low complexity. Basic residues predominate over residues 51-63 (GVRHPLKHRRFRA). The segment covering 80–89 (TTVAEATATG) has biased composition (low complexity). In terms of domain architecture, PPM-type phosphatase spans 115-361 (SCGYSSFRGR…DNITCIVVKF (247 aa)). Residues aspartate 151, glycine 152, aspartate 313, and aspartate 352 each contribute to the Mn(2+) site.

The protein belongs to the PP2C family. Requires Mg(2+) as cofactor. The cofactor is Mn(2+).

It catalyses the reaction O-phospho-L-seryl-[protein] + H2O = L-seryl-[protein] + phosphate. The catalysed reaction is O-phospho-L-threonyl-[protein] + H2O = L-threonyl-[protein] + phosphate. In Oryza sativa subsp. japonica (Rice), this protein is Probable protein phosphatase 2C 7.